Reading from the N-terminus, the 525-residue chain is CTP synthase (525 aa).

The tract at residues 1-269 is amidoligase domain; that stretch reads MKYIIVTGGV…ADAITTHLHL (269 aa). S12 contributes to the CTP binding site. UTP is bound at residue S12. Residues 13 to 18 and D70 contribute to the ATP site; that span reads GLGKGI. Residues D70 and E144 each contribute to the Mg(2+) site. CTP is bound by residues 151-153, 190-195, and K226; these read DIE and KTKPTQ. Residues 190–195 and K226 contribute to the UTP site; that span reads KTKPTQ. One can recognise a Glutamine amidotransferase type-1 domain in the interval 292-524; it reads VAIVSKYGIE…VSACRKNKKT (233 aa). G348 is a binding site for L-glutamine. C375 serves as the catalytic Nucleophile; for glutamine hydrolysis. Residues 376 to 379, E399, and R454 each bind L-glutamine; that span reads LGFQ. Active-site residues include H497 and E499.

It belongs to the CTP synthase family. Homotetramer.

It carries out the reaction UTP + L-glutamine + ATP + H2O = CTP + L-glutamate + ADP + phosphate + 2 H(+). It catalyses the reaction L-glutamine + H2O = L-glutamate + NH4(+). The enzyme catalyses UTP + NH4(+) + ATP = CTP + ADP + phosphate + 2 H(+). The protein operates within pyrimidine metabolism; CTP biosynthesis via de novo pathway; CTP from UDP: step 2/2. Its activity is regulated as follows. Allosterically activated by GTP, when glutamine is the substrate; GTP has no effect on the reaction when ammonia is the substrate. The allosteric effector GTP functions by stabilizing the protein conformation that binds the tetrahedral intermediate(s) formed during glutamine hydrolysis. Inhibited by the product CTP, via allosteric rather than competitive inhibition. In terms of biological role, catalyzes the ATP-dependent amination of UTP to CTP with either L-glutamine or ammonia as the source of nitrogen. Regulates intracellular CTP levels through interactions with the four ribonucleotide triphosphates. In Methanosphaerula palustris (strain ATCC BAA-1556 / DSM 19958 / E1-9c), this protein is CTP synthase.